A 797-amino-acid polypeptide reads, in one-letter code: Striatin-3 (797 aa).

Methionine 1 bears the N-acetylmethionine mark. Gly residues-rich tracts occupy residues methionine 1 to proline 12 and glycine 33 to proline 43. The tract at residues methionine 1–proline 60 is disordered. Residues proline 44 to proline 55 are compositionally biased toward low complexity. The caveolin-binding stretch occupies residues tyrosine 71–phenylalanine 79. Positions alanine 77–lysine 136 form a coiled coil. Residue threonine 150 is modified to Phosphothreonine. Residues glutamine 166–leucine 183 are calmodulin-binding. Phosphoserine is present on residues serine 202, serine 214, serine 229, serine 257, and serine 335. Residues aspartate 313 to proline 336 are disordered. WD repeat units lie at residues serine 478–lysine 517, alanine 531–tyrosine 570, alanine 584–cysteine 623, glutamine 679–serine 718, alanine 721–glutamate 760, and lysine 767–phenylalanine 796.

The protein belongs to the WD repeat striatin family. As to quaternary structure, tetramerizes. Part of the core of STRIPAK complexes composed of PP2A catalytic and scaffolding subunits, the striatins (PP2A regulatory subunits), the striatin-associated proteins MOB4, STRIP1 and STRIP2, PDCD10 and members of the STE20 kinases, such as STK24 and STK26. The STRIPAK complex can be extended by adapter proteins such as SLMAP:SIKE1 or CTTNBP2NL. Interacts with CDC42BPB.

Its subcellular location is the cytoplasm. It localises to the membrane. In terms of biological role, calmodulin-binding scaffolding protein which is the center of the striatin-interacting phosphatase and kinase (STRIPAK) complexes. STRIPAK complexes have critical roles in protein (de)phosphorylation and are regulators of multiple signaling pathways including Hippo, MAPK, nuclear receptor and cytoskeleton remodeling. Different types of STRIPAK complexes are involved in a variety of biological processes such as cell growth, differentiation, apoptosis, metabolism and immune regulation. This Bos taurus (Bovine) protein is Striatin-3 (STRN3).